Here is a 118-residue protein sequence, read N- to C-terminus: Holo-[acyl-carrier-protein] synthase (118 aa).

Asp8 and Glu50 together coordinate Mg(2+).

Belongs to the P-Pant transferase superfamily. AcpS family. Requires Mg(2+) as cofactor.

The protein localises to the cytoplasm. It carries out the reaction apo-[ACP] + CoA = holo-[ACP] + adenosine 3',5'-bisphosphate + H(+). Functionally, transfers the 4'-phosphopantetheine moiety from coenzyme A to a Ser of acyl-carrier-protein. This Leifsonia xyli subsp. xyli (strain CTCB07) protein is Holo-[acyl-carrier-protein] synthase.